The following is a 1715-amino-acid chain: Pentafunctional AROM polypeptide (1715 aa).

A compositionally biased stretch (polar residues) spans 1 to 17; that stretch reads MTSTASAQQPVLRTKTP. Residues 1–26 are disordered; it reads MTSTASAQQPVLRTKTPSYHAPPSTD. The 3-dehydroquinate synthase stretch occupies residues 1–421; it reads MTSTASAQQP…VQNMASTVSD (421 aa). Residues 71–73, 112–115, 143–145, and D148 each bind NAD(+); these read DQN, EASK, and GGV. Position 159 (R159) interacts with 7-phospho-2-dehydro-3-deoxy-D-arabino-heptonate. 168-169 contributes to the NAD(+) binding site; the sequence is TT. D175 and K181 together coordinate 7-phospho-2-dehydro-3-deoxy-D-arabino-heptonate. K190 contributes to the NAD(+) binding site. N191 provides a ligand contact to 7-phospho-2-dehydro-3-deoxy-D-arabino-heptonate. NAD(+) is bound by residues 208–211 and N219; that span reads WLKT. E223 is a Zn(2+) binding site. 7-phospho-2-dehydro-3-deoxy-D-arabino-heptonate-binding positions include 223–226 and K287; that span reads EVVK. Catalysis depends on E297, which acts as the Proton acceptor; for 3-dehydroquinate synthase activity. 7-phospho-2-dehydro-3-deoxy-D-arabino-heptonate-binding positions include 301-305 and H308; that span reads RNLVN. A Zn(2+)-binding site is contributed by H308. The active-site Proton acceptor; for 3-dehydroquinate synthase activity is the H312. Residues H324 and K393 each contribute to the 7-phospho-2-dehydro-3-deoxy-D-arabino-heptonate site. H324 is a Zn(2+) binding site. Residues 434-895 are EPSP synthase; that stretch reads VTPIHEQPNK…WDDLERKLGI (462 aa). C877 (for EPSP synthase activity) is an active-site residue. The interval 948-1165 is shikimate kinase; that stretch reads HATIICIGMR…KGGRRTYFLS (218 aa). Position 955-962 (955-962) interacts with ATP; it reads GMRASGKT. Residues 1166–1389 form a 3-dehydroquinase region; sequence LTFPDVVPKL…AAPGQLSFRQ (224 aa). H1292 functions as the Proton acceptor; for 3-dehydroquinate dehydratase activity in the catalytic mechanism. K1320 (schiff-base intermediate with substrate; for 3-dehydroquinate dehydratase activity) is an active-site residue. The segment at 1402 to 1715 is shikimate dehydrogenase; sequence ARRFALFGSP…AAWDVYLQRC (314 aa).

This sequence in the N-terminal section; belongs to the sugar phosphate cyclases superfamily. Dehydroquinate synthase family. The protein in the 2nd section; belongs to the EPSP synthase family. In the 3rd section; belongs to the shikimate kinase family. It in the 4th section; belongs to the type-I 3-dehydroquinase family. This sequence in the C-terminal section; belongs to the shikimate dehydrogenase family. In terms of assembly, homodimer. Requires Zn(2+) as cofactor.

Its subcellular location is the cytoplasm. It catalyses the reaction 7-phospho-2-dehydro-3-deoxy-D-arabino-heptonate = 3-dehydroquinate + phosphate. The catalysed reaction is 3-dehydroquinate = 3-dehydroshikimate + H2O. The enzyme catalyses shikimate + NADP(+) = 3-dehydroshikimate + NADPH + H(+). It carries out the reaction shikimate + ATP = 3-phosphoshikimate + ADP + H(+). It catalyses the reaction 3-phosphoshikimate + phosphoenolpyruvate = 5-O-(1-carboxyvinyl)-3-phosphoshikimate + phosphate. It functions in the pathway metabolic intermediate biosynthesis; chorismate biosynthesis; chorismate from D-erythrose 4-phosphate and phosphoenolpyruvate: step 2/7. The protein operates within metabolic intermediate biosynthesis; chorismate biosynthesis; chorismate from D-erythrose 4-phosphate and phosphoenolpyruvate: step 3/7. It participates in metabolic intermediate biosynthesis; chorismate biosynthesis; chorismate from D-erythrose 4-phosphate and phosphoenolpyruvate: step 4/7. Its pathway is metabolic intermediate biosynthesis; chorismate biosynthesis; chorismate from D-erythrose 4-phosphate and phosphoenolpyruvate: step 5/7. It functions in the pathway metabolic intermediate biosynthesis; chorismate biosynthesis; chorismate from D-erythrose 4-phosphate and phosphoenolpyruvate: step 6/7. Functionally, the AROM polypeptide catalyzes 5 consecutive enzymatic reactions in prechorismate polyaromatic amino acid biosynthesis. The sequence is that of Pentafunctional AROM polypeptide from Mycosarcoma maydis (Corn smut fungus).